A 671-amino-acid chain; its full sequence is TOM1-like protein 6 (671 aa).

A2 is subject to N-acetylalanine. Positions 15–144 (ATSDLLLGPD…ELRRSGVEFP (130 aa)) constitute a VHS domain. S147 carries the phosphoserine modification. Residues 229-317 (EVEGLSLSSI…LLAKHDAIAS (89 aa)) form the GAT domain. Disordered stretches follow at residues 320-620 (PLPV…VGQK) and 636-671 (GSAD…RKMI). Residues 334–362 (ASKPADSSPKSSEAKDSSSIAGSSSPIPA) show a composition bias toward low complexity. The segment covering 372-382 (DEEYEEEEDEF) has biased composition (acidic residues). Residues 395–405 (SVTTDPTSLES) are compositionally biased toward polar residues. Over residues 407–417 (NAASNALALAL) the composition is skewed to low complexity. Pro residues predominate over residues 444–459 (STPPAPSSQPSPPPPA). Positions 483–554 (AQQQQPQQPQ…QPSTRPQNPY (72 aa)) are enriched in low complexity. Composition is skewed to polar residues over residues 562–598 (ASTS…NSFP) and 605–616 (QATSTASNSGVS). Position 596 is a phosphoserine (S596). Low complexity predominate over residues 647–663 (NSSNGSQNLSGSQTQQS).

The protein belongs to the TOM1 family. In terms of tissue distribution, ubiquitously expressed.

It localises to the endosome. It is found in the multivesicular body. The protein resides in the cytoplasm. Its subcellular location is the early endosome membrane. Acts as a gatekeeper for degradative protein sorting to the vacuole. Plays a role in recognition of ubiquitinated PIN2 auxin carrier at the plasma membrane and further to its endocytic sorting. Binds ubiquitin in vitro. Might contribute to the loading of the ESCRT machinery. The sequence is that of TOM1-like protein 6 from Arabidopsis thaliana (Mouse-ear cress).